Consider the following 133-residue polypeptide: MANHDPISDMLTRIRNASEKRHESTKVPASRMSRSIAKVLQQEGFIAEISEQGEGVRTELVLGLKYSGKHRQPTIRSMQRVSKPGLRIYKNTRGLPKVLGGLGVAIISTSKGVMSDRDARKQGVGGEVLCYVY.

A disordered region spans residues methionine 1 to methionine 32. Residues asparagine 16 to threonine 25 are compositionally biased toward basic and acidic residues.

Belongs to the universal ribosomal protein uS8 family. As to quaternary structure, part of the 30S ribosomal subunit. Contacts proteins S5 and S12.

In terms of biological role, one of the primary rRNA binding proteins, it binds directly to 16S rRNA central domain where it helps coordinate assembly of the platform of the 30S subunit. The polypeptide is Small ribosomal subunit protein uS8 (Synechococcus sp. (strain CC9311)).